We begin with the raw amino-acid sequence, 162 residues long: Probable chemoreceptor glutamine deamidase CheD (162 aa).

Belongs to the CheD family.

It catalyses the reaction L-glutaminyl-[protein] + H2O = L-glutamyl-[protein] + NH4(+). Functionally, probably deamidates glutamine residues to glutamate on methyl-accepting chemotaxis receptors (MCPs), playing an important role in chemotaxis. This chain is Probable chemoreceptor glutamine deamidase CheD, found in Syntrophotalea carbinolica (strain DSM 2380 / NBRC 103641 / GraBd1) (Pelobacter carbinolicus).